We begin with the raw amino-acid sequence, 289 residues long: ATP synthase gamma chain (289 aa).

The protein belongs to the ATPase gamma chain family. F-type ATPases have 2 components, CF(1) - the catalytic core - and CF(0) - the membrane proton channel. CF(1) has five subunits: alpha(3), beta(3), gamma(1), delta(1), epsilon(1). CF(0) has three main subunits: a, b and c.

It localises to the cell inner membrane. In terms of biological role, produces ATP from ADP in the presence of a proton gradient across the membrane. The gamma chain is believed to be important in regulating ATPase activity and the flow of protons through the CF(0) complex. This is ATP synthase gamma chain from Azobacteroides pseudotrichonymphae genomovar. CFP2.